The chain runs to 405 residues: Fragilysin (405 aa).

The first 25 residues, 1-25 (MFILNFNKMKNVKLLLMLGTAALLA), serve as a signal peptide directing secretion. His356 contacts Zn(2+). Residue Glu357 is part of the active site. His360 and His366 together coordinate Zn(2+).

This sequence belongs to the peptidase M10C family. Requires Zn(2+) as cofactor.

It localises to the secreted. It carries out the reaction Broad proteolytic specificity, bonds hydrolyzed includes -Gly-|-Leu-, -Met-|-Leu-, -Phe-|-Leu-, -Cys-|-Leu-, -Leu-|-Gly-.. Diarrheal toxin that hydrolyzes gelatin, azocoll, actin, tropomyosin, and fibrinogen. This chain is Fragilysin (btfP), found in Bacteroides fragilis.